The primary structure comprises 78 residues: uncharacterized protein (78 aa).

The first 22 residues, 1-22, serve as a signal peptide directing secretion; the sequence is MFKKSVLFATLLSGVMAFSTNA.

The protein belongs to the BhsA/McbA family.

Its subcellular location is the periplasm. In terms of biological role, probably involved in reactive chlorine species (RCS) stress resistance. This is an uncharacterized protein from Escherichia coli (strain K12).